We begin with the raw amino-acid sequence, 364 residues long: MATDEMKSETKKTEHKQKQSTQIKQDLPPPTIPPLPLPYKSCTLKVSIHCEGCKRKVKKILTSIEGVFKVDIDVKQHKVTVIGIISPEILLKKLNKAGKNAEQLPEIPDPVDNKPKPVDPKEKNKKKKKEEKVQITNEATSSGIDNPEKPGSGECDKPESEKPVDEKCLSGDGGETSGPVKEEKKDVLKEKDSGKEESPSPPADSSAPAAEKKAEDTGGAVPDNGKVGKKKKKKGQSLATTNNPTDGPARTQSLPPPTATDYDRPINQINDHHITTTNNPPRHDLYPYPAQGYYAPQVMYGVSYNVAQPPVSVDAASYYTPPPPYSYAYMHNGYQPSDQNPCQPRPSDSFELFSDENPNGCAIM.

Basic and acidic residues predominate over residues 1-12 (MATDEMKSETKK). Residues 1–33 (MATDEMKSETKKTEHKQKQSTQIKQDLPPPTIP) form a disordered region. One can recognise an HMA domain in the interval 39–102 (YKSCTLKVSI…KLNKAGKNAE (64 aa)). 2 residues coordinate a metal cation: Cys50 and Cys53. The interval 101 to 265 (AEQLPEIPDP…PPTATDYDRP (165 aa)) is disordered. Basic and acidic residues predominate over residues 111–122 (VDNKPKPVDPKE). Positions 134–144 (QITNEATSSGI) are enriched in polar residues. 2 stretches are compositionally biased toward basic and acidic residues: residues 154 to 169 (ECDK…EKCL) and 180 to 198 (VKEE…KEES). Over residues 237–253 (SLATTNNPTDGPARTQS) the composition is skewed to polar residues. Position 361 is a cysteine methyl ester (Cys361). A lipid anchor (S-farnesyl cysteine) is attached at Cys361. Positions 362–364 (AIM) are cleaved as a propeptide — removed in mature form.

This sequence belongs to the HIPP family.

Its function is as follows. Heavy-metal-binding protein. The protein is Heavy metal-associated isoprenylated plant protein 35 of Arabidopsis thaliana (Mouse-ear cress).